The chain runs to 282 residues: WRKY transcription factor 71 (282 aa).

The interval 63 to 121 (LTSNSPVVSSSSNEGEPKENTNDKSDQMEDNEGDLHGVGESSKQLTKQGKKKGEKKERE) is disordered. Positions 65-75 (SNSPVVSSSSN) are enriched in low complexity. Positions 77 to 99 (GEPKENTNDKSDQMEDNEGDLHG) are enriched in basic and acidic residues. Residues 130 to 195 (SEIDHLEDGY…YEGKHNHPIP (66 aa)) constitute a DNA-binding region (WRKY).

The protein belongs to the WRKY group II-c family.

It localises to the nucleus. Its function is as follows. Transcription factor. Interacts specifically with the W box (5'-(T)TGAC[CT]-3'), a frequently occurring elicitor-responsive cis-acting element. This Arabidopsis thaliana (Mouse-ear cress) protein is WRKY transcription factor 71 (WRKY71).